The sequence spans 430 residues: Purine nucleoside phosphorylase LACC1 (430 aa).

The residue at position 247 (K247) is an N6-acetyllysine. 3 residues coordinate Zn(2+): H250, C284, and H301.

It belongs to the purine nucleoside phosphorylase YfiH/LACC1 family. As to quaternary structure, interacts with FASN. Interacts with SDHA. Interacts with ATF6, EIF2AK3 and ERN1. Phosphorylated on tyrosine residues. In terms of tissue distribution, predominantly expressed in myeloid cells. Highly expressed in primary macrophages and dendritic cells sorted from the peritoneum or spleen, respectively (at protein level).

Its subcellular location is the cytoplasm. It is found in the nucleus. The protein resides in the endoplasmic reticulum. The protein localises to the peroxisome. The enzyme catalyses adenosine + phosphate = alpha-D-ribose 1-phosphate + adenine. It carries out the reaction inosine + phosphate = alpha-D-ribose 1-phosphate + hypoxanthine. It catalyses the reaction guanosine + phosphate = alpha-D-ribose 1-phosphate + guanine. The catalysed reaction is S-methyl-5'-thioadenosine + phosphate = 5-(methylsulfanyl)-alpha-D-ribose 1-phosphate + adenine. The enzyme catalyses adenosine + H2O + H(+) = inosine + NH4(+). Functionally, purine nucleoside enzyme that catalyzes the phosphorolysis of adenosine, guanosine and inosine nucleosides, yielding D-ribose 1-phosphate and the respective free bases, adenine, guanine and hypoxanthine. Also catalyzes the phosphorolysis of S-methyl-5'-thioadenosine into adenine and S-methyl-5-thio-alpha-D-ribose 1-phosphate. Also has adenosine deaminase activity. Acts as a regulator of innate immunity in macrophages by modulating the purine nucleotide metabolism, thereby regulating the metabolic function and bioenergetic state of macrophages. Enables a purine nucleotide cycle between adenosine and inosine monophosphate and adenylosuccinate that prevents cytoplasmic acidification and balances the cytoplasmic-mitochondrial redox interface. The purine nucleotide cycle consumes aspartate and releases fumarate in a manner involving fatty acid oxidation and ATP-citrate lyase activity. Participates in pattern recognition receptor-induced cytokines in macrophages: associates with the NOD2-signaling complex and promotes optimal NOD2-induced signaling, cytokine secretion and bacterial clearance. Localizes to the endoplasmic reticulum upon PRR stimulation of macrophages and associates with endoplasmic reticulum-stress sensors, promoting the endoplasmic reticulum unfolded protein response (UPR). Does not show laccase activity. This is Purine nucleoside phosphorylase LACC1 from Mus musculus (Mouse).